The sequence spans 337 residues: Thiazole synthase (337 aa).

Residues 1–41 (MSQHPLRPAGSRPGDSPPDGSCPDGLAGGGSAVGGGGGGEA) are disordered. Residues 10-25 (GSRPGDSPPDGSCPDG) are compositionally biased toward low complexity. A compositionally biased stretch (gly residues) spans 26-41 (LAGGGSAVGGGGGGEA). The active-site Schiff-base intermediate with DXP is Lys-144. Residues Gly-205, 231–232 (AG), and 253–254 (NT) each bind 1-deoxy-D-xylulose 5-phosphate. A disordered region spans residues 302 to 337 (FLGAHPSPASHPSPASPVPSVSRATSPAAVVGEASR). Over residues 319-337 (VPSVSRATSPAAVVGEASR) the composition is skewed to low complexity.

Belongs to the ThiG family. In terms of assembly, homotetramer. Forms heterodimers with either ThiH or ThiS.

The protein resides in the cytoplasm. The catalysed reaction is [ThiS sulfur-carrier protein]-C-terminal-Gly-aminoethanethioate + 2-iminoacetate + 1-deoxy-D-xylulose 5-phosphate = [ThiS sulfur-carrier protein]-C-terminal Gly-Gly + 2-[(2R,5Z)-2-carboxy-4-methylthiazol-5(2H)-ylidene]ethyl phosphate + 2 H2O + H(+). It functions in the pathway cofactor biosynthesis; thiamine diphosphate biosynthesis. In terms of biological role, catalyzes the rearrangement of 1-deoxy-D-xylulose 5-phosphate (DXP) to produce the thiazole phosphate moiety of thiamine. Sulfur is provided by the thiocarboxylate moiety of the carrier protein ThiS. In vitro, sulfur can be provided by H(2)S. In Frankia casuarinae (strain DSM 45818 / CECT 9043 / HFP020203 / CcI3), this protein is Thiazole synthase.